The primary structure comprises 715 residues: Protein DENND6 homolog (715 aa).

Residues 13-58 are a coiled coil; that stretch reads MIFKEEEIKKQQILLEKEEKEKQEQQQKKLNKDNIFKLEEEGKKLE. In terms of domain architecture, uDENN spans 96 to 273; sequence NSFCIINFDL…VKQHQLGGGS (178 aa). 2 disordered regions span residues 269-296 and 392-416; these read LGGG…SNTT and SGTR…NNNN. Positions 299-476 constitute a cDENN domain; it reads SPSIWSEMKL…KDLLTRHVLD (178 aa). Residues 399-416 are compositionally biased toward low complexity; the sequence is SNNNNNQDDSEYNNNNNN. In terms of domain architecture, dDENN spans 478-600; that stretch reads KEKILSEYKP…KQWLDDKRAQ (123 aa).

This sequence belongs to the DENND6 family.

The chain is Protein DENND6 homolog from Dictyostelium discoideum (Social amoeba).